Reading from the N-terminus, the 209-residue chain is Small ribosomal subunit protein uS3 (209 aa).

Positions Ile17–Lys86 constitute a KH type-2 domain.

It belongs to the universal ribosomal protein uS3 family. In terms of assembly, part of the 30S ribosomal subunit.

Its function is as follows. Binds the lower part of the 30S subunit head. The chain is Small ribosomal subunit protein uS3 from Thermococcus gammatolerans (strain DSM 15229 / JCM 11827 / EJ3).